Consider the following 643-residue polypeptide: MIHITLPDGSQREYPGPVTVAEVAASIGTGLAKAALAGKVGTGDDAKVVDTSFVINKDMPLSIVTAKDADGLDVIRHSTAHLLAYAVKDLFPDAQVTIGPVIENGFYYDFSYKRPFTPEDLVAIEKRMAELAAKDEPVVRRVLPRDEAVAYFKGIGENYKAEIIASIPSNEDVSLYREGSFEDLCRGPHVPSTGKLKFFKLMKVAGAYWRGDHRNEMLQRVYGTAWASKDDLQQYLHMLEEAEKRDHRKLGRELDLFHIDEHSPGTVFWHPKGWSLWQEVEQYMRRVYRDNGYQEVKGPQILDKTLWEKTGHWDKYRENMFTTESEKRDYALKPMNCPGHILIFKQGIKSYRDLPLRYGEFGQCHRNEPTGGLHGIMRVRGFTQDDGHVFCTEDQIQPEVLAFTTLLQKVYADFGFSDIIYKVATRPEARIGSDESWDKAEAALINSLEASGCEYVISPGDGAFYGPKIEYTLKDAIGRQWQCGTIQVDFSMPERLDAEYVGEDGDRHRPVMLHRAIVGSLERFIGILIEQHAGAMPTWLAPVQAAVLNITDAQADYVREVAQKLQKAFPNQGLRVATDLRNEKITYKIREHSLQKLPYILVAGDKEKAAGAVAVRARGNKDLGVMSVDAFIELVAKDIAAKA.

One can recognise a TGS domain in the interval 1–65; the sequence is MIHITLPDGS…NKDMPLSIVT (65 aa). The tract at residues 246–537 is catalytic; that stretch reads DHRKLGRELD…LIEQHAGAMP (292 aa). Residues Cys337, His388, and His514 each coordinate Zn(2+).

The protein belongs to the class-II aminoacyl-tRNA synthetase family. Homodimer. Zn(2+) serves as cofactor.

The protein resides in the cytoplasm. The enzyme catalyses tRNA(Thr) + L-threonine + ATP = L-threonyl-tRNA(Thr) + AMP + diphosphate + H(+). In terms of biological role, catalyzes the attachment of threonine to tRNA(Thr) in a two-step reaction: L-threonine is first activated by ATP to form Thr-AMP and then transferred to the acceptor end of tRNA(Thr). Also edits incorrectly charged L-seryl-tRNA(Thr). This Delftia acidovorans (strain DSM 14801 / SPH-1) protein is Threonine--tRNA ligase.